The primary structure comprises 163 residues: 2,3-dimethylmalate dehydratase small subunit (163 aa).

It belongs to the LeuD family. LeuD type 2 subfamily. Heterodimer of a large and a small subunit.

The catalysed reaction is (2R,3S)-2,3-dimethylmalate = dimethylmaleate + H2O. It functions in the pathway cofactor degradation; nicotinate degradation; propanoate and pyruvate from 6-hydroxynicotinate: step 7/8. The polypeptide is 2,3-dimethylmalate dehydratase small subunit (Eubacterium barkeri (Clostridium barkeri)).